A 338-amino-acid polypeptide reads, in one-letter code: Purple acid phosphatase 17 (338 aa).

An N-terminal signal peptide occupies residues 1-31; the sequence is MNSGRRSLMSATASLSLLLCIFTTFVVVSNG. Residue D53 coordinates Fe cation. The N-linked (GlcNAc...) asparagine glycan is linked to N61. Residues D86 and Y89 each coordinate Fe cation. D86 is a binding site for Zn(2+). Residues N124 and H218 each coordinate Zn(2+). Catalysis depends on H227, which acts as the Proton donor. A Zn(2+)-binding site is contributed by H253. 253 to 255 contributes to the substrate binding site; the sequence is HDH. H255 contacts Fe cation.

The protein belongs to the metallophosphoesterase superfamily. Purple acid phosphatase family. Homodimer. The cofactor is Fe cation. It depends on Zn(2+) as a cofactor. Expressed in roots, stems, leaves, flowers and siliques.

The protein resides in the secreted. It catalyses the reaction a phosphate monoester + H2O = an alcohol + phosphate. The catalysed reaction is 2 a phenolic donor + H2O2 = 2 a phenolic radical donor + 2 H2O. Its activity is regulated as follows. Inhibited by phosphate and molybdate. Metallo-phosphoesterase involved in phosphate metabolism. Has a peroxidase activity. The sequence is that of Purple acid phosphatase 17 (PAP17) from Arabidopsis thaliana (Mouse-ear cress).